Here is a 113-residue protein sequence, read N- to C-terminus: Inner membrane protein YiaB (113 aa).

At 1–9 (MKTSKTVAK) the chain is on the cytoplasmic side. Residues 10–20 (LLFVVGALVYL) form a helical membrane-spanning segment. The Periplasmic segment spans residues 21–33 (VGLWISCPLLSGK). A helical transmembrane segment spans residues 34 to 51 (GYFLGVLMTATFGNYAYL). At 52–61 (RAEKLGQLDD) the chain is on the cytoplasmic side. The helical transmembrane segment at 62–82 (FFTHICQLVALITIGLLFIGV) threads the bilayer. The Periplasmic portion of the chain corresponds to 83–84 (LN). A helical membrane pass occupies residues 85 to 105 (APINTYEMVIYPIAFFVCLFG). Residues 106–113 (QMRLFRSA) are Cytoplasmic-facing.

It is found in the cell inner membrane. This chain is Inner membrane protein YiaB (yiaB), found in Escherichia coli (strain K12).